A 101-amino-acid chain; its full sequence is Urease subunit beta (101 aa).

The protein belongs to the urease beta subunit family. Heterotrimer of UreA (gamma), UreB (beta) and UreC (alpha) subunits. Three heterotrimers associate to form the active enzyme.

Its subcellular location is the cytoplasm. The enzyme catalyses urea + 2 H2O + H(+) = hydrogencarbonate + 2 NH4(+). Its pathway is nitrogen metabolism; urea degradation; CO(2) and NH(3) from urea (urease route): step 1/1. The polypeptide is Urease subunit beta (Paraburkholderia phymatum (strain DSM 17167 / CIP 108236 / LMG 21445 / STM815) (Burkholderia phymatum)).